The chain runs to 178 residues: tRNA (cytidine(56)-2'-O)-methyltransferase (178 aa).

S-adenosyl-L-methionine is bound by residues Leu-84, 109–113 (GAEKV), and 127–134 (IGNQPHSE).

It belongs to the aTrm56 family. As to quaternary structure, homodimer.

The protein localises to the cytoplasm. The enzyme catalyses cytidine(56) in tRNA + S-adenosyl-L-methionine = 2'-O-methylcytidine(56) in tRNA + S-adenosyl-L-homocysteine + H(+). Specifically catalyzes the AdoMet-dependent 2'-O-ribose methylation of cytidine at position 56 in tRNAs. The sequence is that of tRNA (cytidine(56)-2'-O)-methyltransferase from Methanococcoides burtonii (strain DSM 6242 / NBRC 107633 / OCM 468 / ACE-M).